Here is a 473-residue protein sequence, read N- to C-terminus: Double-stranded RNA-binding protein 7 (473 aa).

Positions 1–10 are enriched in pro residues; sequence MDMPPTPLPP. Residues 1–22 are disordered; the sequence is MDMPPTPLPPETANTSPAPNGA. DRBM domains are found at residues 33-102 and 118-185; these read VFKS…EIVK and LCKN…AIQG. 3 stretches are compositionally biased toward basic and acidic residues: residues 286–307, 317–327, and 416–427; these read KRVE…ENQH, DEARVEQEPSR, and VDARVVKEESPR. Disordered regions lie at residues 286–329 and 393–473; these read KRVE…SRDI and QLNE…MSEE. The segment covering 433 to 450 has biased composition (polar residues); the sequence is EATNMKETPKNSAVCNSP.

Functionally, binds double-stranded RNA. This chain is Double-stranded RNA-binding protein 7 (DRB7), found in Oryza sativa subsp. japonica (Rice).